A 124-amino-acid chain; its full sequence is uncharacterized protein (124 aa).

The signal sequence occupies residues 1-19; that stretch reads MRLLVQKVILIYLARYAKS. Transmembrane regions (helical) follow at residues 37-57 and 86-108; these read IAEFLWVYVGSALAYVVGVKF and LGALALITIARAFCVAHINIIII.

It localises to the membrane. This is an uncharacterized protein from Saccharomyces cerevisiae (strain ATCC 204508 / S288c) (Baker's yeast).